The primary structure comprises 122 residues: Ribosome-binding factor A (122 aa).

This sequence belongs to the RbfA family. In terms of assembly, monomer. Binds 30S ribosomal subunits, but not 50S ribosomal subunits or 70S ribosomes.

The protein resides in the cytoplasm. One of several proteins that assist in the late maturation steps of the functional core of the 30S ribosomal subunit. Associates with free 30S ribosomal subunits (but not with 30S subunits that are part of 70S ribosomes or polysomes). Required for efficient processing of 16S rRNA. May interact with the 5'-terminal helix region of 16S rRNA. This Albidiferax ferrireducens (strain ATCC BAA-621 / DSM 15236 / T118) (Rhodoferax ferrireducens) protein is Ribosome-binding factor A.